A 105-amino-acid chain; its full sequence is MNTIALYLLTAVAEILGCYLPYLWLRQGASAWVLLPGALSLALFAWLLSLHPDASGRVYAAYGGVYIGVAVLWLWLVDGVRPSAWDLAGVGVAFGGMAIIVFQPR.

Helical transmembrane passes span 4 to 24 (IALYLLTAVAEILGCYLPYLW), 28 to 48 (GASAWVLLPGALSLALFAWLL), 60 to 80 (AAYGGVYIGVAVLWLWLVDGV), and 82 to 102 (PSAWDLAGVGVAFGGMAIIVF).

This sequence belongs to the UPF0060 family.

It is found in the cell inner membrane. This Cupriavidus pinatubonensis (strain JMP 134 / LMG 1197) (Cupriavidus necator (strain JMP 134)) protein is UPF0060 membrane protein Reut_B3679.